Consider the following 276-residue polypeptide: Large ribosomal subunit protein uL2 (276 aa).

The disordered stretch occupies residues 224-276 (AMNPIDHPHGGGEGKTSGGRNPVTPWGVPTKGKKTRKRNKSSNKYIKRVSDKG). Positions 254 to 270 (KGKKTRKRNKSSNKYIK) are enriched in basic residues.

This sequence belongs to the universal ribosomal protein uL2 family. In terms of assembly, part of the 50S ribosomal subunit. Forms a bridge to the 30S subunit in the 70S ribosome.

One of the primary rRNA binding proteins. Required for association of the 30S and 50S subunits to form the 70S ribosome, for tRNA binding and peptide bond formation. It has been suggested to have peptidyltransferase activity; this is somewhat controversial. Makes several contacts with the 16S rRNA in the 70S ribosome. In Ehrlichia chaffeensis (strain ATCC CRL-10679 / Arkansas), this protein is Large ribosomal subunit protein uL2.